An 848-amino-acid polypeptide reads, in one-letter code: Protein SEY1 (848 aa).

At 1 to 733 (MNGNFAAVGS…KRGALGGMTQ (733 aa)) the chain is on the cytoplasmic side. Positions 47-277 (GFNYHLISVF…FVGGVFLPEY (231 aa)) constitute a GB1/RHD3-type G domain. 57-64 (GSQSTGKS) provides a ligand contact to GTP. The chain crosses the membrane as a helical span at residues 734 to 754 (VPLYFWIALFAFGWNEIWMVI). The Lumenal portion of the chain corresponds to 755-757 (RNP). Residues 758 to 778 (FLFILLLLSAGGTYVAYNLSL) form a helical membrane-spanning segment. The Cytoplasmic portion of the chain corresponds to 779–848 (LGPMMQMTNA…KKKDYDDDGI (70 aa)). The tract at residues 815–848 (LAMPASSKSSGGEQVRMDTLDSKGKKKDYDDDGI) is disordered. The span at 829–848 (VRMDTLDSKGKKKDYDDDGI) shows a compositional bias: basic and acidic residues.

It belongs to the TRAFAC class dynamin-like GTPase superfamily. GB1/RHD3 GTPase family. RHD3 subfamily.

The protein resides in the endoplasmic reticulum membrane. Its function is as follows. Cooperates with the reticulon proteins and tubule-shaping DP1 family proteins to generate and maintain the structure of the tubular endoplasmic reticulum network. Has GTPase activity, which is required for its function in ER organization. This chain is Protein SEY1, found in Pyricularia oryzae (strain 70-15 / ATCC MYA-4617 / FGSC 8958) (Rice blast fungus).